The chain runs to 342 residues: Deoxyhypusine synthase regulatory subunit (342 aa).

NAD(+) is bound by residues serine 72–serine 76, threonine 98–glycine 100, glutamate 104, aspartate 213, threonine 282–glycine 283, and aspartate 316–alanine 317.

This sequence belongs to the deoxyhypusine synthase family. Heterotetramer formed by a homodimer of the non-catalytic regulatory subunit DHSp and a homodimer of the catalytic subunit DHSc where DHSc appears to bind spermidine and DHSp appears to bind NAD(+).

It functions in the pathway protein modification; eIF5A hypusination. Required for the activation and stability of deoxyhypusine synthase DHSc. Required for cell growth and survival. This chain is Deoxyhypusine synthase regulatory subunit, found in Trypanosoma brucei brucei (strain 927/4 GUTat10.1).